The chain runs to 429 residues: Stromal membrane-associated protein 2 (429 aa).

Residues 13–137 (QAVLANLLLE…LDINAFRKEK (125 aa)) enclose the Arf-GAP domain. A C4-type zinc finger spans residues 28 to 51 (CADCQSKGPRWASWNIGVFICIRC). The residue at position 127 (S127) is a Phosphoserine. The span at 138-172 (DNKWKRGSEPAPEKKMEPVVFEKVKMPQKKEDPQL) shows a compositional bias: basic and acidic residues. Disordered regions lie at residues 138–181 (DNKW…PKSK) and 217–263 (VSSP…KKQL). The interaction with clathrin heavy chains stretch occupies residues 163–232 (MPQKKEDPQL…SVSRKVVGSM (70 aa)). Positions 217–231 (VSSPSSSVSRKVVGS) are enriched in low complexity. Residues S219, S223, S225, S231, and S240 each carry the phosphoserine modification. The span at 253-263 (SKSEETSKKQL) shows a compositional bias: basic and acidic residues. The segment at 340–429 (MGGMQASMMG…NQTLSPQMWK (90 aa)) is interaction with PICALM.

In terms of assembly, interacts with ARF1. Interacts with PICALM and clathrin heavy chains.

It is found in the cytoplasm. GTPase activating protein that acts on ARF1. Can also activate ARF6 (in vitro). May play a role in clathrin-dependent retrograde transport from early endosomes to the trans-Golgi network. The protein is Stromal membrane-associated protein 2 (SMAP2) of Bos taurus (Bovine).